Reading from the N-terminus, the 172-residue chain is Peptidyl-prolyl cis-trans isomerase (172 aa).

The PPIase cyclophilin-type domain occupies 7–170; it reads FFDMSVGGQP…KKVVVEDCGQ (164 aa).

The protein belongs to the cyclophilin-type PPIase family. In terms of processing, not glycosylated. In terms of tissue distribution, expressed in pollen.

The protein localises to the cytoplasm. It carries out the reaction [protein]-peptidylproline (omega=180) = [protein]-peptidylproline (omega=0). With respect to regulation, binds cyclosporin A (CsA). CsA mediates some of its effects via an inhibitory action on PPIase. Functionally, PPIases accelerate the folding of proteins. It catalyzes the cis-trans isomerization of proline imidic peptide bonds in oligopeptides. The chain is Peptidyl-prolyl cis-trans isomerase (PCKR1) from Catharanthus roseus (Madagascar periwinkle).